Consider the following 348-residue polypeptide: Phospho-2-dehydro-3-deoxyheptonate aldolase, Trp-sensitive (348 aa).

It belongs to the class-I DAHP synthase family.

The catalysed reaction is D-erythrose 4-phosphate + phosphoenolpyruvate + H2O = 7-phospho-2-dehydro-3-deoxy-D-arabino-heptonate + phosphate. It functions in the pathway metabolic intermediate biosynthesis; chorismate biosynthesis; chorismate from D-erythrose 4-phosphate and phosphoenolpyruvate: step 1/7. In terms of biological role, stereospecific condensation of phosphoenolpyruvate (PEP) and D-erythrose-4-phosphate (E4P) giving rise to 3-deoxy-D-arabino-heptulosonate-7-phosphate (DAHP). This chain is Phospho-2-dehydro-3-deoxyheptonate aldolase, Trp-sensitive (aroH), found in Escherichia coli O157:H7.